We begin with the raw amino-acid sequence, 332 residues long: Glycerol-3-phosphate dehydrogenase [NAD(P)+] (332 aa).

NADPH-binding residues include W13, K34, and K108. Residues K108, G136, and S138 each contribute to the sn-glycerol 3-phosphate site. A140 contributes to the NADPH binding site. 5 residues coordinate sn-glycerol 3-phosphate: K191, D244, S254, R255, and N256. K191 acts as the Proton acceptor in catalysis. R255 is a binding site for NADPH. 2 residues coordinate NADPH: V279 and E281.

Belongs to the NAD-dependent glycerol-3-phosphate dehydrogenase family.

It is found in the cytoplasm. It carries out the reaction sn-glycerol 3-phosphate + NAD(+) = dihydroxyacetone phosphate + NADH + H(+). The catalysed reaction is sn-glycerol 3-phosphate + NADP(+) = dihydroxyacetone phosphate + NADPH + H(+). It participates in membrane lipid metabolism; glycerophospholipid metabolism. In terms of biological role, catalyzes the reduction of the glycolytic intermediate dihydroxyacetone phosphate (DHAP) to sn-glycerol 3-phosphate (G3P), the key precursor for phospholipid synthesis. This Francisella tularensis subsp. holarctica (strain FTNF002-00 / FTA) protein is Glycerol-3-phosphate dehydrogenase [NAD(P)+].